The sequence spans 122 residues: MIQVESKLDVADNSGAKKVSCIKVLGGSKRRYASVGDIIVVSVKEAMPHSKVKKGAVMKAVVVRTKKEIGRPDGSYIKFDNNSAVLLNNSMDPVGTRIFGPVARELRGAGFMKIVSLAPEVL.

Belongs to the universal ribosomal protein uL14 family. Part of the 50S ribosomal subunit. Forms a cluster with proteins L3 and L19. In the 70S ribosome, L14 and L19 interact and together make contacts with the 16S rRNA in bridges B5 and B8.

Functionally, binds to 23S rRNA. Forms part of two intersubunit bridges in the 70S ribosome. This is Large ribosomal subunit protein uL14 from Maridesulfovibrio salexigens (strain ATCC 14822 / DSM 2638 / NCIMB 8403 / VKM B-1763) (Desulfovibrio salexigens).